We begin with the raw amino-acid sequence, 147 residues long: Ubiquitin-conjugating enzyme E2-16 kDa (147 aa).

In terms of domain architecture, UBC core spans 1–147; that stretch reads MALKRINKEL…AREWTRKYAI (147 aa). The active-site Glycyl thioester intermediate is the C107.

This sequence belongs to the ubiquitin-conjugating enzyme family.

The enzyme catalyses S-ubiquitinyl-[E1 ubiquitin-activating enzyme]-L-cysteine + [E2 ubiquitin-conjugating enzyme]-L-cysteine = [E1 ubiquitin-activating enzyme]-L-cysteine + S-ubiquitinyl-[E2 ubiquitin-conjugating enzyme]-L-cysteine.. The protein operates within protein modification; protein ubiquitination. Catalyzes the covalent attachment of ubiquitin to other proteins. The protein is Ubiquitin-conjugating enzyme E2-16 kDa (UBC1) of Pyricularia oryzae (strain 70-15 / ATCC MYA-4617 / FGSC 8958) (Rice blast fungus).